The chain runs to 155 residues: Protein FAM162A (155 aa).

Residues 77–103 are required for proapoptotic activity; that stretch reads RFKKEEEIPETISFEMLDAAKNKLRVK. The chain crosses the membrane as a helical span at residues 104 to 121; the sequence is VSYLMIALTVAGCIYMVI.

It belongs to the UPF0389 family. As to quaternary structure, interacts with HSP90AB1; HSP90AB1 is essential for FAM162A mitochondrial localization and pro-apoptotic activity. Interacts with VDAC2; the interaction is probably involved in inducing mitochondrial permeability transition.

It is found in the mitochondrion membrane. In terms of biological role, proposed to be involved in regulation of apoptosis; the exact mechanism may differ between cell types/tissues. May be involved in hypoxia-induced cell death of transformed cells implicating cytochrome C release and caspase activation (such as CASP9) and inducing mitochondrial permeability transition. May be involved in hypoxia-induced cell death of neuronal cells probably by promoting release of AIFM1 from mitochondria to cytoplasm and its translocation to the nucleus; however, the involvement of caspases has been reported conflictingly. This chain is Protein FAM162A (Fam162a), found in Mus musculus (Mouse).